Here is a 301-residue protein sequence, read N- to C-terminus: uncharacterized protein (301 aa).

2 disordered regions span residues 56-126 (ESPT…ESDL) and 149-173 (LSTE…DASS). Basic and acidic residues predominate over residues 71–82 (VQKENQKPKDLN). The span at 93–102 (KNSSGLVSQI) shows a compositional bias: polar residues. Residues 161-173 (SNTSSSSMSDASS) show a composition bias toward low complexity.

This is an uncharacterized protein from Caenorhabditis elegans.